The following is a 315-amino-acid chain: Secreted mono- and diacylglycerol lipase LIP2 (315 aa).

The signal sequence occupies residues 1-21 (MACFRVILYLSVIFFVQCVFA). Residues C68 and C308 are joined by a disulfide bond. The N-linked (GlcNAc...) asparagine glycan is linked to N74. S182 functions as the Nucleophile in the catalytic mechanism. D240 is a catalytic residue. N265 carries an N-linked (GlcNAc...) asparagine glycan. H292 is a catalytic residue.

The protein belongs to the AB hydrolase superfamily. Lipase family. Class 3 subfamily.

It localises to the secreted. It catalyses the reaction a monoacylglycerol + H2O = glycerol + a fatty acid + H(+). The enzyme catalyses a diacylglycerol + H2O = a monoacylglycerol + a fatty acid + H(+). Secreted lipase involved in Dandruff and seborrheic dermatitis (D/SD) probably via lipase-mediated breakdown of sebaceous lipids and release of irritating free fatty acids. Shows activity against monoglyceride and diglyceride substrates and generates free oleic acid from the substrates mono- and diolein. Able to cleave the oleic acid from both the 1 and the 2 position of the glycerol backbone as 1,2 isomers of diolein were converted into oleic acid and glycerol. Due to an absence of fatty acid synthase genes in Malassezia species, secretory lipases are essential for the yeast to generate free fatty acids from degradation of sebum and assimilate them as lipid sources for growth. Plays an essential role at the pathogen-host interface during disease progression. Also performs the reverse reaction to build diacylglycerols from monoacylglycerols. The polypeptide is Secreted mono- and diacylglycerol lipase LIP2 (Malassezia restricta (strain ATCC 96810 / NBRC 103918 / CBS 7877) (Seborrheic dermatitis infection agent)).